We begin with the raw amino-acid sequence, 131 residues long: Maturin (131 aa).

Acidic residues predominate over residues 107–120; it reads FEEYNADVEEEEPE. The tract at residues 107–131 is disordered; sequence FEEYNADVEEEEPEADHQQMGVSQQ.

It belongs to the MTURN family.

It localises to the cytoplasm. Involved in early neuronal development; required for cell cycle exit and differentiation of primary neurons. Cooperates synergistically with pak3 to promote primary neural differentiation within the neural plate. May play a role in promoting megakaryocyte differentiation. This is Maturin (mturn) from Xenopus laevis (African clawed frog).